The following is a 90-amino-acid chain: Small ribosomal subunit protein uS15 (90 aa).

The protein belongs to the universal ribosomal protein uS15 family. In terms of assembly, part of the 30S ribosomal subunit. Forms a bridge to the 50S subunit in the 70S ribosome, contacting the 23S rRNA.

One of the primary rRNA binding proteins, it binds directly to 16S rRNA where it helps nucleate assembly of the platform of the 30S subunit by binding and bridging several RNA helices of the 16S rRNA. In terms of biological role, forms an intersubunit bridge (bridge B4) with the 23S rRNA of the 50S subunit in the ribosome. The polypeptide is Small ribosomal subunit protein uS15 (Thermotoga maritima (strain ATCC 43589 / DSM 3109 / JCM 10099 / NBRC 100826 / MSB8)).